The primary structure comprises 405 residues: D-threonate kinase (405 aa).

Residues D12, R59, and 88-91 (KVDS) contribute to the substrate site. ATP-binding positions include S243, 337-340 (GGDG), and G383.

This sequence belongs to the four-carbon acid sugar kinase family.

The enzyme catalyses D-threonate + ATP = 4-O-phospho-D-threonate + ADP + H(+). Its function is as follows. Catalyzes the ATP-dependent phosphorylation of D-threonate to D-threonate 4-phosphate. Can also phosphorylate 4-hydroxy-L-threonine, with lower efficiency. In Bordetella bronchiseptica (strain ATCC BAA-588 / NCTC 13252 / RB50) (Alcaligenes bronchisepticus), this protein is D-threonate kinase.